The sequence spans 204 residues: 3-isopropylmalate dehydratase small subunit (204 aa).

It belongs to the LeuD family. LeuD type 1 subfamily. As to quaternary structure, heterodimer of LeuC and LeuD.

The enzyme catalyses (2R,3S)-3-isopropylmalate = (2S)-2-isopropylmalate. It participates in amino-acid biosynthesis; L-leucine biosynthesis; L-leucine from 3-methyl-2-oxobutanoate: step 2/4. Catalyzes the isomerization between 2-isopropylmalate and 3-isopropylmalate, via the formation of 2-isopropylmaleate. The polypeptide is 3-isopropylmalate dehydratase small subunit (Chloroflexus aggregans (strain MD-66 / DSM 9485)).